Here is a 406-residue protein sequence, read N- to C-terminus: Vacuole membrane protein 1 (406 aa).

A2 carries the post-translational modification N-acetylalanine. Residues 2–43 (AENGQNCDQRRVAMNKEQYNGNFTDPSSVNEKKRRDREERQN) lie on the Cytoplasmic side of the membrane. Residues 44 to 63 (IVLWRQPLITLQYFSLETLV) form a helical membrane-spanning segment. At 64-77 (ILKEWTSKLWHRQS) the chain is on the extracellular side. Residues 78–98 (IVVSFLLLLAVLTATYYVEGA) traverse the membrane as a helical segment. At 99-109 (HQQYVQRIEKQ) the chain is on the cytoplasmic side. Residues 110 to 130 (FLLYAYWIGLGILSSVGLGTG) form a helical membrane-spanning segment. At 131-250 (LHTFLLYLGP…ASRAKLAVQN (120 aa)) the chain is on the extracellular side. The interval 173–316 (GTEGTISLWS…FVIVAFSKHI (144 aa)) is VTT domain. A helical membrane pass occupies residues 251-271 (LVQKVGFFGILACASIPNPLF). Residues 272–273 (DL) lie on the Cytoplasmic side of the membrane. The chain crosses the membrane as a helical span at residues 274–294 (AGITCGHFLVPFWTFFGATLI). Residues 295–306 (GKAIIKMHIQKL) are Extracellular-facing. The chain crosses the membrane as a helical span at residues 307 to 327 (FVIVAFSKHIVEQMVAFIGAV). At 328–363 (PGIGPSLQKPFQEYLEAQRQKLHHRSEMGTPQGENW) the chain is on the cytoplasmic side. A helical transmembrane segment spans residues 364–384 (LSWMFEKLVVVMVCYFILSII). Topologically, residues 385 to 406 (NSMAQSYAKRIQQRLDPKEKTK) are extracellular.

Belongs to the VMP1 family. Interacts with BECN1. Interacts with TJP1. Interacts with TP53INP2. Interacts with TMEM41B. Interacts with ATP2A2, PLN and SLN; competes with PLN and SLN to prevent them from forming an inhibitory complex with ATP2A2. Interacts with ATG2A.

It is found in the endoplasmic reticulum-Golgi intermediate compartment membrane. The protein localises to the cell membrane. The protein resides in the vacuole membrane. It localises to the endoplasmic reticulum membrane. It carries out the reaction a 1,2-diacyl-sn-glycero-3-phospho-L-serine(in) = a 1,2-diacyl-sn-glycero-3-phospho-L-serine(out). The catalysed reaction is cholesterol(in) = cholesterol(out). The enzyme catalyses a 1,2-diacyl-sn-glycero-3-phosphocholine(in) = a 1,2-diacyl-sn-glycero-3-phosphocholine(out). It catalyses the reaction a 1,2-diacyl-sn-glycero-3-phosphoethanolamine(in) = a 1,2-diacyl-sn-glycero-3-phosphoethanolamine(out). Functionally, phospholipid scramblase involved in lipid homeostasis and membrane dynamics processes. Has phospholipid scramblase activity toward cholesterol and phosphatidylserine, as well as phosphatidylethanolamine and phosphatidylcholine. Required for autophagosome formation: participates in early stages of autophagosome biogenesis at the endoplasmic reticulum (ER) membrane by reequilibrating the leaflets of the ER as lipids are extracted by ATG2 (ATG2A or ATG2B) to mediate autophagosome assembly. Regulates ATP2A2 activity to control ER-isolation membrane contacts for autophagosome formation. In addition to autophagy, involved in other processes in which phospholipid scramblase activity is required. Modulates ER contacts with lipid droplets, mitochondria and endosomes. Plays an essential role in formation of cell junctions. Upon stress such as bacterial and viral infection, promotes formation of cytoplasmic vacuoles followed by cell death. Involved in the cytoplasmic vacuolization of acinar cells during the early stage of acute pancreatitis. This Bos taurus (Bovine) protein is Vacuole membrane protein 1.